A 215-amino-acid chain; its full sequence is Adenylate kinase (215 aa).

ATP is bound at residue 10 to 15 (GAGKGT). Residues 30–59 (STGDMLRAAVKAGSPLGQQVKGVMDSGGLV) form an NMP region. Residues Thr31, Arg36, 57-59 (GLV), 85-88 (GFPR), and Gln92 each bind AMP. The segment at 122 to 159 (GRRVHPASGRVYHTEHNPPKVAGKDDVTGEDLIQREDD) is LID. Residues Arg123 and 132–133 (VY) contribute to the ATP site. Positions 156 and 167 each coordinate AMP. Residue Gly201 participates in ATP binding.

It belongs to the adenylate kinase family. Monomer.

It is found in the cytoplasm. It carries out the reaction AMP + ATP = 2 ADP. It functions in the pathway purine metabolism; AMP biosynthesis via salvage pathway; AMP from ADP: step 1/1. Catalyzes the reversible transfer of the terminal phosphate group between ATP and AMP. Plays an important role in cellular energy homeostasis and in adenine nucleotide metabolism. The polypeptide is Adenylate kinase (Pseudomonas paraeruginosa (strain DSM 24068 / PA7) (Pseudomonas aeruginosa (strain PA7))).